We begin with the raw amino-acid sequence, 307 residues long: Homoserine kinase (307 aa).

Residue 92–102 (PLARGLGSSAT) participates in ATP binding.

This sequence belongs to the GHMP kinase family. Homoserine kinase subfamily.

It is found in the cytoplasm. It catalyses the reaction L-homoserine + ATP = O-phospho-L-homoserine + ADP + H(+). It functions in the pathway amino-acid biosynthesis; L-threonine biosynthesis; L-threonine from L-aspartate: step 4/5. Functionally, catalyzes the ATP-dependent phosphorylation of L-homoserine to L-homoserine phosphate. The protein is Homoserine kinase (thrB) of Microchaete diplosiphon (Fremyella diplosiphon).